Reading from the N-terminus, the 232-residue chain is Small ribosomal subunit protein uS3 (232 aa).

Residues 39 to 107 (IRAFLKKKLY…EVNVNIKEER (69 aa)) form the KH type-2 domain. Positions 211 to 232 (GVQPEKTEEEAPKKTRRARRGK) are disordered. A compositionally biased stretch (basic and acidic residues) spans 213-223 (QPEKTEEEAPK).

The protein belongs to the universal ribosomal protein uS3 family. Part of the 30S ribosomal subunit. Forms a tight complex with proteins S10 and S14.

Binds the lower part of the 30S subunit head. Binds mRNA in the 70S ribosome, positioning it for translation. The chain is Small ribosomal subunit protein uS3 from Campylobacter concisus (strain 13826).